The primary structure comprises 198 residues: Recombination protein RecR (198 aa).

A C4-type zinc finger spans residues 56–71; sequence CDICGNVSEEPTCRIC. A Toprim domain is found at 79 to 175; the sequence is AVVCVVEEPK…NVTRLASGLP (97 aa).

It belongs to the RecR family.

May play a role in DNA repair. It seems to be involved in an RecBC-independent recombinational process of DNA repair. It may act with RecF and RecO. This chain is Recombination protein RecR, found in Saccharopolyspora erythraea (strain ATCC 11635 / DSM 40517 / JCM 4748 / NBRC 13426 / NCIMB 8594 / NRRL 2338).